A 324-amino-acid chain; its full sequence is Dehydrogenase/reductase SDR family member 7C-A (324 aa).

Residues 1-17 form the signal peptide; sequence MAVPSVMVLPLLIVVFA. An NAD(+)-binding site is contributed by 41-65; it reads VITDAVSGMGSECARLFHAGGARLV. Serine 178 contacts substrate. The Proton acceptor role is filled by tyrosine 191.

Belongs to the short-chain dehydrogenases/reductases (SDR) family.

The protein resides in the secreted. In terms of biological role, putative oxidoreductase. This is Dehydrogenase/reductase SDR family member 7C-A (dhrs7ca) from Danio rerio (Zebrafish).